Consider the following 366-residue polypeptide: tRNA-specific 2-thiouridylase MnmA (366 aa).

Residues 12–19 and M38 each bind ATP; that span reads GMSGGVDS. The interval 98 to 100 is interaction with target base in tRNA; it reads NPD. C103 acts as the Nucleophile in catalysis. A disulfide bridge links C103 with C200. Position 128 (G128) interacts with ATP. Residues 150 to 152 are interaction with tRNA; the sequence is KDQ. C200 acts as the Cysteine persulfide intermediate in catalysis. The segment at 312–313 is interaction with tRNA; the sequence is RY.

Belongs to the MnmA/TRMU family.

Its subcellular location is the cytoplasm. The catalysed reaction is S-sulfanyl-L-cysteinyl-[protein] + uridine(34) in tRNA + AH2 + ATP = 2-thiouridine(34) in tRNA + L-cysteinyl-[protein] + A + AMP + diphosphate + H(+). Its function is as follows. Catalyzes the 2-thiolation of uridine at the wobble position (U34) of tRNA, leading to the formation of s(2)U34. The sequence is that of tRNA-specific 2-thiouridylase MnmA from Pseudoalteromonas translucida (strain TAC 125).